Reading from the N-terminus, the 156-residue chain is Regulatory protein RecX (156 aa).

It belongs to the RecX family.

It is found in the cytoplasm. Modulates RecA activity. This Pseudomonas putida (strain W619) protein is Regulatory protein RecX.